Here is a 62-residue protein sequence, read N- to C-terminus: Small ribosomal subunit protein bS21 (62 aa).

Residues 40–52 (KPSVKRKLKSEAA) show a composition bias toward basic and acidic residues. A disordered region spans residues 40–62 (KPSVKRKLKSEAARKRKNKRRRY). Over residues 53 to 62 (RKRKNKRRRY) the composition is skewed to basic residues.

The protein belongs to the bacterial ribosomal protein bS21 family.

In Limosilactobacillus fermentum (strain NBRC 3956 / LMG 18251) (Lactobacillus fermentum), this protein is Small ribosomal subunit protein bS21.